A 137-amino-acid chain; its full sequence is Flagellar basal body rod protein FlgB (137 aa).

This sequence belongs to the flagella basal body rod proteins family. As to quaternary structure, the basal body constitutes a major portion of the flagellar organelle and consists of a number of rings mounted on a central rod. In Gram-negative bacteria, at least four rings, L, P, S and M are present, whereas Gram-positive bacteria lack the L and P rings. The rod consists of about 26 subunits of FlgG in the distal portion, and FlgB, FlgC and FlgF build up the proximal portion of the rod with about 6 subunits each. Rod assembly occurs by export via the flagellum-specific pathway of its constituent proteins and by their incorporation into the rod structure in the probable order of FlgB, FlgC, FlgF and FlgG. Another protein, FliE, also assembles onto the stable rod structure.

The protein resides in the bacterial flagellum basal body. Functionally, structural component of flagellum, the bacterial motility apparatus. Part of the rod structure of flagellar basal body. The protein is Flagellar basal body rod protein FlgB of Proteus mirabilis (strain HI4320).